The chain runs to 185 residues: Ribosome-recycling factor (185 aa).

Belongs to the RRF family.

It is found in the cytoplasm. In terms of biological role, responsible for the release of ribosomes from messenger RNA at the termination of protein biosynthesis. May increase the efficiency of translation by recycling ribosomes from one round of translation to another. The polypeptide is Ribosome-recycling factor (Geobacter sulfurreducens (strain ATCC 51573 / DSM 12127 / PCA)).